The primary structure comprises 446 residues: tRNA modification GTPase MnmE (446 aa).

Residues arginine 28, glutamate 85, and lysine 124 each coordinate (6S)-5-formyl-5,6,7,8-tetrahydrofolate. Residues 220-372 form the TrmE-type G domain; that stretch reads GLTVVLVGQP…LRAKLLQAAG (153 aa). Asparagine 230 is a K(+) binding site. GTP is bound by residues 230–235, 249–255, and 274–277; these read NVGKSS, TEIAGTT, and DTAG. Serine 234 contacts Mg(2+). Positions 249, 251, and 254 each coordinate K(+). Threonine 255 contacts Mg(2+). A (6S)-5-formyl-5,6,7,8-tetrahydrofolate-binding site is contributed by lysine 446.

Belongs to the TRAFAC class TrmE-Era-EngA-EngB-Septin-like GTPase superfamily. TrmE GTPase family. Homodimer. Heterotetramer of two MnmE and two MnmG subunits. The cofactor is K(+).

It is found in the cytoplasm. Its function is as follows. Exhibits a very high intrinsic GTPase hydrolysis rate. Involved in the addition of a carboxymethylaminomethyl (cmnm) group at the wobble position (U34) of certain tRNAs, forming tRNA-cmnm(5)s(2)U34. The protein is tRNA modification GTPase MnmE of Thiobacillus denitrificans (strain ATCC 25259 / T1).